A 238-amino-acid polypeptide reads, in one-letter code: Uridylate kinase (238 aa).

12–15 is a binding site for ATP; that stretch reads KLSG. UMP is bound at residue G54. Residues G55 and R59 each coordinate ATP. UMP-binding positions include D74 and 135 to 142; that span reads TGNPYFTT. 4 residues coordinate ATP: T162, N163, Y168, and D171.

Belongs to the UMP kinase family. In terms of assembly, homohexamer.

It is found in the cytoplasm. The catalysed reaction is UMP + ATP = UDP + ADP. It functions in the pathway pyrimidine metabolism; CTP biosynthesis via de novo pathway; UDP from UMP (UMPK route): step 1/1. With respect to regulation, inhibited by UTP. Functionally, catalyzes the reversible phosphorylation of UMP to UDP. This is Uridylate kinase from Rhodopseudomonas palustris (strain ATCC BAA-98 / CGA009).